Reading from the N-terminus, the 75-residue chain is Small ribosomal subunit protein bS18 (75 aa).

The protein belongs to the bacterial ribosomal protein bS18 family. As to quaternary structure, part of the 30S ribosomal subunit. Forms a tight heterodimer with protein bS6.

Binds as a heterodimer with protein bS6 to the central domain of the 16S rRNA, where it helps stabilize the platform of the 30S subunit. The protein is Small ribosomal subunit protein bS18 of Thermosipho melanesiensis (strain DSM 12029 / CIP 104789 / BI429).